A 461-amino-acid chain; its full sequence is UDP-glucose 6-dehydrogenase TuaD (461 aa).

Residues 3–20 (KIAV…GTCF), valine 12, aspartate 31, lysine 36, threonine 122, and glutamate 156 each bind NAD(+). Substrate-binding positions include 152–156 (EFLRE), lysine 205, asparagine 209, 250–254 (FLKAG), and glycine 258. Cysteine 261 (nucleophile) is an active-site residue. Lysine 264 is an NAD(+) binding site. Lysine 321 is a binding site for substrate. Position 328 (arginine 328) interacts with NAD(+).

Belongs to the UDP-glucose/GDP-mannose dehydrogenase family. Phosphorylated by YwqD and dephosphorylated by YwqE in vitro.

It localises to the cytoplasm. The enzyme catalyses UDP-alpha-D-glucose + 2 NAD(+) + H2O = UDP-alpha-D-glucuronate + 2 NADH + 3 H(+). It participates in nucleotide-sugar biosynthesis; UDP-alpha-D-glucuronate biosynthesis; UDP-alpha-D-glucuronate from UDP-alpha-D-glucose: step 1/1. With respect to regulation, activated by phosphorylation; inhibited by dephosphorylation. Functionally, catalyzes the conversion of UDP-glucose into UDP-glucuronate, one of the precursors of teichuronic acid. The protein is UDP-glucose 6-dehydrogenase TuaD (tuaD) of Bacillus subtilis (strain 168).